The primary structure comprises 258 residues: 5'-nucleotidase SurE (258 aa).

A divalent metal cation is bound by residues D9, D10, S42, and N96.

Belongs to the SurE nucleotidase family. The cofactor is a divalent metal cation.

The protein resides in the cytoplasm. The catalysed reaction is a ribonucleoside 5'-phosphate + H2O = a ribonucleoside + phosphate. Functionally, nucleotidase that shows phosphatase activity on nucleoside 5'-monophosphates. This Campylobacter jejuni subsp. jejuni serotype O:6 (strain 81116 / NCTC 11828) protein is 5'-nucleotidase SurE.